The chain runs to 395 residues: 1-deoxy-D-xylulose 5-phosphate reductoisomerase (395 aa).

Residues Thr15, Gly16, Ser17, Ile18, Gly41, Asn43, and Asn126 each coordinate NADPH. Residue Lys127 participates in 1-deoxy-D-xylulose 5-phosphate binding. Residue Glu128 coordinates NADPH. Asp152 lines the Mn(2+) pocket. Residues Ser153, Glu154, Ser178, and His201 each contribute to the 1-deoxy-D-xylulose 5-phosphate site. Glu154 contacts Mn(2+). Residue Gly207 participates in NADPH binding. 1-deoxy-D-xylulose 5-phosphate contacts are provided by Ser214, Asn219, Lys220, and Glu223. Glu223 provides a ligand contact to Mn(2+).

It belongs to the DXR family. The cofactor is Mg(2+). Mn(2+) serves as cofactor.

The enzyme catalyses 2-C-methyl-D-erythritol 4-phosphate + NADP(+) = 1-deoxy-D-xylulose 5-phosphate + NADPH + H(+). It functions in the pathway isoprenoid biosynthesis; isopentenyl diphosphate biosynthesis via DXP pathway; isopentenyl diphosphate from 1-deoxy-D-xylulose 5-phosphate: step 1/6. Catalyzes the NADPH-dependent rearrangement and reduction of 1-deoxy-D-xylulose-5-phosphate (DXP) to 2-C-methyl-D-erythritol 4-phosphate (MEP). The polypeptide is 1-deoxy-D-xylulose 5-phosphate reductoisomerase (Ruegeria pomeroyi (strain ATCC 700808 / DSM 15171 / DSS-3) (Silicibacter pomeroyi)).